A 317-amino-acid polypeptide reads, in one-letter code: NAC domain-containing protein 19 (317 aa).

One can recognise an NAC domain in the interval 14-162 (LPPGFRFYPT…DWVLCRIYKK (149 aa)).

Dimer. Interacts with RHA2A, RHA2B or RHG1A, but not with RHA3A or RHA3B. Expressed in stems, flowers, cauline leaves and rosettes.

The protein resides in the nucleus. Transcription factors that bind specifically to the 5'-CATGTG-3' motif. In Arabidopsis thaliana (Mouse-ear cress), this protein is NAC domain-containing protein 19 (NAC019).